The sequence spans 398 residues: Acetate kinase (398 aa).

Residue asparagine 9 participates in Mg(2+) binding. Lysine 16 contributes to the ATP binding site. Arginine 93 lines the substrate pocket. Aspartate 150 functions as the Proton donor/acceptor in the catalytic mechanism. ATP is bound by residues 209–213 (HLGAG), 284–286 (DMR), and 329–333 (GIGEH). Residue glutamate 382 participates in Mg(2+) binding.

This sequence belongs to the acetokinase family. In terms of assembly, homodimer. Requires Mg(2+) as cofactor. It depends on Mn(2+) as a cofactor.

The protein resides in the cytoplasm. It carries out the reaction acetate + ATP = acetyl phosphate + ADP. It participates in metabolic intermediate biosynthesis; acetyl-CoA biosynthesis; acetyl-CoA from acetate: step 1/2. Its function is as follows. Catalyzes the formation of acetyl phosphate from acetate and ATP. Can also catalyze the reverse reaction. In Rhodopseudomonas palustris (strain TIE-1), this protein is Acetate kinase.